We begin with the raw amino-acid sequence, 391 residues long: MFKSPFGANANPFGGASDGATVGGNAMHQVIEEEENDTVTSPTSPNFGMNAQSMFSGPFGGDASDDVLPSALRSPPNPESYPAQYNFSRRTSVSAESLKPSADTYDNWTPPVHDKTNEQLSRLKTAIAGNFLFSHLDDEQSAQILGALIEKPIPAKDIKVISQGDAGDYFYVVEKGSFDVYVNEKGTLQPGPEGMGEKVGTIQAGGSFGELALMYNAPRAATVISAEPGCTLWALDRLTFRRILMESTFSRRRMYEDFLREVPLLQTLTPYERSKIADALETQKYTPGATIIKEGDPGHSFYLLESGEADAYLGDGKESVKHYSKGDFFGELALLNDAPRAASIVATTDVKVASLGKSAFQRLLGPVEGIMRRTKYDDIKTGVEEMDPLQV.

Residues 1–84 are disordered; that stretch reads MFKSPFGANA…PPNPESYPAQ (84 aa). Residues 1-131 form a dimerization and phosphorylation region; that stretch reads MFKSPFGANA…RLKTAIAGNF (131 aa). Positions 38–55 are enriched in polar residues; the sequence is TVTSPTSPNFGMNAQSMF. Position 92 is a phosphoserine (serine 92). Residues 132–261, glutamate 210, arginine 219, 264–381, glutamate 331, and arginine 340 contribute to the 3',5'-cyclic AMP site; these read LFSH…FLRE and LLQT…DIKT.

The protein belongs to the cAMP-dependent kinase regulatory chain family. In terms of assembly, tetramer, composed of 2 regulatory (R) and 2 catalytic (C) subunits. In the presence of cAMP it dissociates into 2 active monomeric C subunits and an R dimer.

This is cAMP-dependent protein kinase regulatory subunit (PKAR) from Colletotrichum orbiculare (strain 104-T / ATCC 96160 / CBS 514.97 / LARS 414 / MAFF 240422) (Cucumber anthracnose fungus).